The chain runs to 228 residues: NAD(P)H-hydrate epimerase (228 aa).

Positions 10 to 214 (AIDIDQELFN…DLERKYDLKI (205 aa)) constitute a YjeF N-terminal domain. 58-62 (NNGGD) lines the (6S)-NADPHX pocket. K(+) is bound by residues asparagine 59 and aspartate 123. (6S)-NADPHX contacts are provided by residues 127-133 (GFSFKPP) and aspartate 156. A K(+)-binding site is contributed by serine 159.

It belongs to the NnrE/AIBP family. Requires K(+) as cofactor.

It catalyses the reaction (6R)-NADHX = (6S)-NADHX. The catalysed reaction is (6R)-NADPHX = (6S)-NADPHX. Functionally, catalyzes the epimerization of the S- and R-forms of NAD(P)HX, a damaged form of NAD(P)H that is a result of enzymatic or heat-dependent hydration. This is a prerequisite for the S-specific NAD(P)H-hydrate dehydratase to allow the repair of both epimers of NAD(P)HX. The sequence is that of NAD(P)H-hydrate epimerase from Pediculus humanus subsp. corporis (Body louse).